A 140-amino-acid polypeptide reads, in one-letter code: Ribonuclease P protein component (140 aa).

Belongs to the RnpA family. In terms of assembly, consists of a catalytic RNA component (M1 or rnpB) and a protein subunit.

It catalyses the reaction Endonucleolytic cleavage of RNA, removing 5'-extranucleotides from tRNA precursor.. Its function is as follows. RNaseP catalyzes the removal of the 5'-leader sequence from pre-tRNA to produce the mature 5'-terminus. It can also cleave other RNA substrates such as 4.5S RNA. The protein component plays an auxiliary but essential role in vivo by binding to the 5'-leader sequence and broadening the substrate specificity of the ribozyme. In Nostoc sp. (strain PCC 7120 / SAG 25.82 / UTEX 2576), this protein is Ribonuclease P protein component.